We begin with the raw amino-acid sequence, 1052 residues long: MIELKLKNFKCFENKTFNFKDEMVLISAPSGSGKTSILSAIKFALWGSGKTLTKGEIMHGKNSCSVTLTYNDITIQRTKRPNRLVYTKQNEIYEDNEAQIYINEYFGNQSHNNFLESSSLDKTEYLEKMAFGKSTEIIELMKENTKENIRSINDETNNTEGQLSLTKKLLKSVINDWNNRMCSIVEPQIPQIPVFENKVLNVSIYEEKDNIEKEIESLKLKNINHSILKSKLETILKQKCDLMNQIQNVKNNIDVTKNNLIYLNDLSTVSIDDLQEKINKINHEKKILNEKHTKILIEKSNLQNFLNETNTLNQKLTELKIKKENLTPTIVLSSENEQSTQSFSLLKTRETHELNSLKTTLQNDISCMTEIMLKESVCKSQTDSLKKNIVKIEDEVVRLLNITKTVNLTLMNENLSTLYQQSDHFNKIAAQKTILTTKVQNINIEKSKIEEKMVKTQKCNEDDVNKLDFKVQKLEKVKSFNKYLNSIKEHLKQSFPGVETLEFTGHKSQLSVIKDFFEDALYTQKLGDKAPKYKCPKCLHPLSIQHKNDKINIVSYIDEYILEILVKVNELLSEYNNETTIEVMDDEEIENIKDFKKLILEREAFQIQIKKLEEEIKNLPVLYDKSNEIQSLQNTIASYNANNIQLLKEETKLKEEKKLLTQNITMSKLIHEESNKIKDTYKIMIGIDKDITNENIQTYLKKELSDLESELKERLIFETNLLIYNDIVSQIKTILDRQTIITEEIATIKKFIEEHSNIDELIDNLNQEHNLCYTNLLNKHKYEQYNTQLLNYINLCVEYNESLNKVETDMETLKDQLKDDEKCCLELQKLQEYMKQIESFIKIQKKYELELNKFNEWTKLKNEYKKSVSNYETIINDLENRLLKLNNEYSASITLKLKISEAQNIALTSLVDTINIYVQQFLDLFFEEPIVINLTMFKETDKKGLKATPRYQPKVTVNLYYKGVLCPSDLSSLSSGEYARVSLAFTLAFHQINNNKVTPLMLDERTANLDQDLSTLIYSVIKENFPNQLLLVVAHQVITGPFDNIITLQDYN.

Belongs to the IIV-6 050L family.

This is an uncharacterized protein from Invertebrate iridescent virus 6 (IIV-6).